The sequence spans 166 residues: Ribosomal RNA large subunit methyltransferase H (166 aa).

S-adenosyl-L-methionine is bound by residues Leu-85, Gly-116, and 135–140; that span reads ISKMTF.

It belongs to the RNA methyltransferase RlmH family. In terms of assembly, homodimer.

The protein resides in the cytoplasm. It carries out the reaction pseudouridine(1915) in 23S rRNA + S-adenosyl-L-methionine = N(3)-methylpseudouridine(1915) in 23S rRNA + S-adenosyl-L-homocysteine + H(+). Functionally, specifically methylates the pseudouridine at position 1915 (m3Psi1915) in 23S rRNA. The chain is Ribosomal RNA large subunit methyltransferase H from Francisella tularensis subsp. holarctica (strain FTNF002-00 / FTA).